The sequence spans 358 residues: Methionine import ATP-binding protein MetN (358 aa).

In terms of domain architecture, ABC transporter spans 14–255 (VVFDAVSKRF…SRHETTRALL (242 aa)). Residue 52-59 (GRSGAGKS) participates in ATP binding.

The protein belongs to the ABC transporter superfamily. Methionine importer (TC 3.A.1.24) family. As to quaternary structure, the complex is composed of two ATP-binding proteins (MetN), two transmembrane proteins (MetI) and a solute-binding protein (MetQ).

It is found in the cell inner membrane. It catalyses the reaction L-methionine(out) + ATP + H2O = L-methionine(in) + ADP + phosphate + H(+). The catalysed reaction is D-methionine(out) + ATP + H2O = D-methionine(in) + ADP + phosphate + H(+). Functionally, part of the ABC transporter complex MetNIQ involved in methionine import. Responsible for energy coupling to the transport system. The chain is Methionine import ATP-binding protein MetN from Rhizobium meliloti (strain 1021) (Ensifer meliloti).